The chain runs to 228 residues: Small ribosomal subunit protein uS7A (228 aa).

The protein belongs to the universal ribosomal protein uS7 family.

The sequence is that of Small ribosomal subunit protein uS7A (RpS5a) from Drosophila melanogaster (Fruit fly).